We begin with the raw amino-acid sequence, 113 residues long: Protein suex-1 (113 aa).

A signal peptide spans 1 to 22 (MQSLLVFCLATIILSNFTEASA).

The polypeptide is Protein suex-1 (Caenorhabditis elegans).